The sequence spans 318 residues: tRNA dimethylallyltransferase (318 aa).

Residue 21 to 28 coordinates ATP; it reads GPTATGKS. 23 to 28 is a substrate binding site; sequence TATGKS. Residues 46-49 are interaction with substrate tRNA; that stretch reads DSMQ.

The protein belongs to the IPP transferase family. Monomer. Mg(2+) serves as cofactor.

It carries out the reaction adenosine(37) in tRNA + dimethylallyl diphosphate = N(6)-dimethylallyladenosine(37) in tRNA + diphosphate. Catalyzes the transfer of a dimethylallyl group onto the adenine at position 37 in tRNAs that read codons beginning with uridine, leading to the formation of N6-(dimethylallyl)adenosine (i(6)A). In Acidothermus cellulolyticus (strain ATCC 43068 / DSM 8971 / 11B), this protein is tRNA dimethylallyltransferase.